Reading from the N-terminus, the 305-residue chain is Acyl transferase (305 aa).

Residues Ser-114, Asp-211, and His-241 each act as charge relay system in the active site.

Belongs to the LuxD family.

Its pathway is lipid metabolism; fatty acid reduction for biolumincescence. Its function is as follows. Acyl transferase is part of the fatty acid reductase system required for aldehyde biosynthesis; it produces fatty acids for the luminescent reaction. The chain is Acyl transferase (luxD) from Vibrio harveyi (Beneckea harveyi).